The following is a 351-amino-acid chain: Calcium release-activated calcium channel protein 1 (351 aa).

The segment covering 1–21 has biased composition (polar residues); it reads MSVWTTANNSGLETPTKSPIT. 2 disordered regions span residues 1-39 and 71-141; these read MSVW…TGNH and HAHP…EDLH. At 1–163 the chain is on the cytoplasmic side; the sequence is MSVWTTANNS…SRAKLKASSK (163 aa). 2 stretches are compositionally biased toward low complexity: residues 22 to 33 and 80 to 93; these read SSVPRAARSSAV and SNSP…SNNS. Residues 94–106 are compositionally biased toward polar residues; the sequence is AGFQRTSISNSLL. The chain crosses the membrane as a helical span at residues 164-181; it reads TSALLSGFAMVAMVEVQL. Residues 182–191 lie on the Extracellular side of the membrane; sequence DHDTNVPPGM. The helical transmembrane segment at 192–212 threads the bilayer; that stretch reads LIAFAICTTLLVAVHMLALMI. Topologically, residues 213-248 are cytoplasmic; it reads STCILPNIETVCNLHSISLVHESPHERLHWYIETAW. A helical membrane pass occupies residues 249-269; the sequence is AFSTLLGLILFLLEIAILCWV. Over 270-277 the chain is Extracellular; the sequence is KFYDLSPP. Residues 278 to 298 traverse the membrane as a helical segment; it reads AAWSACVVLIPVMIIFMAFAI. Topologically, residues 299-351 are cytoplasmic; the sequence is HFYRSLVSHKYEVTVSGIRELEMLKEQMEQDHLEHHNNIRNNGMNYGASGDIV.

Belongs to the Orai family. Hexamer.

The protein localises to the cell membrane. It carries out the reaction Ca(2+)(in) = Ca(2+)(out). Functionally, pore-forming subunit of inward rectifying Ca(2+) release-activated Ca(2+) (CRAC) channels. Assembles in hexameric CRAC channels that mediate Ca(2+) influx upon depletion of endoplasmic reticulum Ca(2+) store and channel activation by Ca(2+) sensor Stim, a process known as store-operated Ca(2+) entry (SOCE). Regulates transcription factor NFAT nuclear import. In Drosophila melanogaster (Fruit fly), this protein is Calcium release-activated calcium channel protein 1.